Here is a 339-residue protein sequence, read N- to C-terminus: Small ribosomal subunit protein mS27 (339 aa).

Residues 1–37 constitute a mitochondrion transit peptide; it reads MGTITVVINEGPILLIRALHRATTNKKMFRSTVWRRF.

It belongs to the mitochondrion-specific ribosomal protein mS27 family. As to quaternary structure, component of the mitochondrial small ribosomal subunit (mt-SSU). Mature yeast 74S mitochondrial ribosomes consist of a small (37S) and a large (54S) subunit. The 37S small subunit contains a 15S ribosomal RNA (15S mt-rRNA) and 34 different proteins. The 54S large subunit contains a 21S rRNA (21S mt-rRNA) and 46 different proteins.

It localises to the mitochondrion. Functionally, component of the mitochondrial ribosome (mitoribosome), a dedicated translation machinery responsible for the synthesis of mitochondrial genome-encoded proteins, including at least some of the essential transmembrane subunits of the mitochondrial respiratory chain. The mitoribosomes are attached to the mitochondrial inner membrane and translation products are cotranslationally integrated into the membrane. The sequence is that of Small ribosomal subunit protein mS27 (MRP13) from Saccharomyces cerevisiae (strain ATCC 204508 / S288c) (Baker's yeast).